Here is a 312-residue protein sequence, read N- to C-terminus: Porphobilinogen deaminase (312 aa).

Cysteine 241 carries the S-(dipyrrolylmethanemethyl)cysteine modification.

Belongs to the HMBS family. Monomer. The cofactor is dipyrromethane.

The catalysed reaction is 4 porphobilinogen + H2O = hydroxymethylbilane + 4 NH4(+). Its pathway is porphyrin-containing compound metabolism; protoporphyrin-IX biosynthesis; coproporphyrinogen-III from 5-aminolevulinate: step 2/4. In terms of biological role, tetrapolymerization of the monopyrrole PBG into the hydroxymethylbilane pre-uroporphyrinogen in several discrete steps. This chain is Porphobilinogen deaminase, found in Aliarcobacter butzleri (strain RM4018) (Arcobacter butzleri).